A 300-amino-acid chain; its full sequence is UPF0282 protein TGAM_0379 (300 aa).

The protein belongs to the UPF0282 family.

The sequence is that of UPF0282 protein TGAM_0379 from Thermococcus gammatolerans (strain DSM 15229 / JCM 11827 / EJ3).